We begin with the raw amino-acid sequence, 607 residues long: MRASGQGPQRRRRGWATRDDSAVTFRDPQPRQPAGGARALRGPDPRGPARAHQAGPLLAGARRSQHMVGGAPPRPAETGCSRSRMTQKNSKLCARANVYTQVPDGGWGWAVAVSFFFVEVFTYGIIKSFGVFFNDLMDSFDESNSKISWIISICVFVLTFTAPLSTVLSNRFGHRLVVMAGGLLISLGMITASFSQRVYHMYISIGVISGLGYCFSFLPTVTILSQYFDKRRSVVTAVASTGECFAVFAFAPAITALKEHIGWRYSLLFVGLLQLNIMVCGALLRPIIIQGPGQSPKAVTLEPRREVQYMLENEKTRTSIDSIDSGVELTTSPKNVPSEAKMEQETRAEQQQTLVTAPKHSQMKAPLLDFSVLKEKSFICYALFGLFATLGFFAPSLYIIPLGISLGIDPDRAAFLLSTMAIAEVFGRIGAGFVLNREPIRKIYIELICVILLTASLFAFTFATEFWGLMLCSVFFGSMVGTIGGTHIPMLAEDDVVGIEKMSSAAGVYVFIQSISGLAGPPLAGLLVDQSKIYSRAFYSCAAGMCLAAVCLALVRPCKKGLCQNSHSGENQTDRQRGKALQDIPEDFLEMDLGKCEHRAHMKMDPV.

A disordered region spans residues 1–84 (MRASGQGPQR…PAETGCSRSR (84 aa)). Topologically, residues 1–105 (MRASGQGPQR…ANVYTQVPDG (105 aa)) are cytoplasmic. Residues 106–126 (GWGWAVAVSFFFVEVFTYGII) traverse the membrane as a helical segment. Residues 127–146 (KSFGVFFNDLMDSFDESNSK) are Extracellular-facing. The helical transmembrane segment at 147-167 (ISWIISICVFVLTFTAPLSTV) threads the bilayer. Residues 168–175 (LSNRFGHR) are Cytoplasmic-facing. The helical transmembrane segment at 176–196 (LVVMAGGLLISLGMITASFSQ) threads the bilayer. The Extracellular segment spans residues 197-202 (RVYHMY). A helical transmembrane segment spans residues 203–223 (ISIGVISGLGYCFSFLPTVTI). The Cytoplasmic segment spans residues 224 to 233 (LSQYFDKRRS). The chain crosses the membrane as a helical span at residues 234–254 (VVTAVASTGECFAVFAFAPAI). The Extracellular portion of the chain corresponds to 255 to 268 (TALKEHIGWRYSLL). A helical transmembrane segment spans residues 269–289 (FVGLLQLNIMVCGALLRPIII). At 290–383 (QGPGQSPKAV…KEKSFICYAL (94 aa)) the chain is on the cytoplasmic side. Ser319, Ser322, Ser325, and Ser332 each carry phosphoserine. A helical transmembrane segment spans residues 384 to 404 (FGLFATLGFFAPSLYIIPLGI). The Extracellular segment spans residues 405–414 (SLGIDPDRAA). Residues 415–435 (FLLSTMAIAEVFGRIGAGFVL) traverse the membrane as a helical segment. Residues 436-442 (NREPIRK) lie on the Cytoplasmic side of the membrane. A helical membrane pass occupies residues 443–463 (IYIELICVILLTASLFAFTFA). Residues 464–465 (TE) are Extracellular-facing. A helical membrane pass occupies residues 466–486 (FWGLMLCSVFFGSMVGTIGGT). Residues 487–507 (HIPMLAEDDVVGIEKMSSAAG) lie on the Cytoplasmic side of the membrane. Residues 508–528 (VYVFIQSISGLAGPPLAGLLV) traverse the membrane as a helical segment. Residues 529–536 (DQSKIYSR) are Extracellular-facing. A helical transmembrane segment spans residues 537-557 (AFYSCAAGMCLAAVCLALVRP). Residues 558 to 607 (CKKGLCQNSHSGENQTDRQRGKALQDIPEDFLEMDLGKCEHRAHMKMDPV) lie on the Cytoplasmic side of the membrane.

Belongs to the major facilitator superfamily. Monocarboxylate porter (TC 2.A.1.13) family. Forms functional complexes with BSG/CD147 or EMB/GP70 ancillary proteins.

The protein resides in the basolateral cell membrane. It carries out the reaction taurine(out) = taurine(in). In terms of biological role, monocarboxylate transporter selective for taurine. May associate with BSG/CD147 or EMB/GP70 ancillary proteins to mediate facilitative efflux or influx of taurine across the plasma membrane. The transport is pH- and sodium-independent. Rather low-affinity, is likely effective for taurine transport in tissues where taurine is present at high concentrations. The polypeptide is Monocarboxylate transporter 7 (Mus musculus (Mouse)).